The chain runs to 968 residues: Insulin receptor substrate 1 (968 aa).

The PH domain occupies 8 to 109 (GMALSGYLKK…WLDKLLVLQR (102 aa)). An IRS-type PTB domain is found at 122-236 (YDHVWQVVIQ…SAMSAKTESN (115 aa)). The segment at 248–269 (DLSHEPMRKRSSSANEASKPIN) is disordered. Phosphoserine occurs at positions 286 and 287. Residues 304–329 (RNGTLSESSNQTYFGSNHGLRSNTIS) show a composition bias toward polar residues. The segment at 304–370 (RNGTLSESSN…VDESDDNGSF (67 aa)) is disordered. Ser-342 is subject to Phosphoserine. Tyr-411 carries the phosphotyrosine; by INSR modification. Residues 411–414 (YIPM) carry the YXXM motif 1 motif. Residues 528–555 (TANRSQSSITKEGTSYGSSANRQKKSTS) are disordered. The span at 529–555 (ANRSQSSITKEGTSYGSSANRQKKSTS) shows a compositional bias: polar residues. Phosphoserine is present on Ser-555. A YXXM motif 2 motif is present at residues 641–644 (YLEM). Positions 697 to 711 (EKWREQPSRSEEKKS) are enriched in basic and acidic residues. The interval 697 to 739 (EKWREQPSRSEEKKSNSPLNDNTFSSKPTNVESTSKSHDVHSA) is disordered. The span at 712 to 730 (NSPLNDNTFSSKPTNVEST) shows a compositional bias: polar residues. Tyr-911 bears the Phosphotyrosine; by INSR mark. Residues 922–968 (QNPAKYLKRGSRESPPVSACPEDGNTYAKIDFDQSDSSSSSSNIFNT) form a disordered region. Ser-932 and Ser-935 each carry phosphoserine. The residue at position 948 (Tyr-948) is a Phosphotyrosine; by INSR. Residues 956-968 (SDSSSSSSNIFNT) show a composition bias toward low complexity.

As to quaternary structure, bindings to phosphatidylinositol 3-kinase and SHP2.

In terms of biological role, activates phosphatidylinositol 3-kinase when bound to the regulatory p85 subunit. May mediate the control of various cellular processes by insulin-like peptides. When phosphorylated by the insulin receptor binds specifically to various cellular proteins containing SH2 domains. Involved in control of cell proliferation, cell size, and body and organ growth throughout development. Also has a role in a signaling pathway controlling the physiological response required to endure periods of low nutrient conditions. Insulin/insulin-like growth factor (IGF) signaling pathway has a role in regulating aging and is necessary in the ovary for vitellogenic maturation. This chain is Insulin receptor substrate 1 (chico), found in Drosophila melanogaster (Fruit fly).